We begin with the raw amino-acid sequence, 360 residues long: MAFDPAANAGPPLDEIQWHTPPQFEAGIHSNSILYYFAQSPFYDKTSNNEVVFQQGLNNQAMSQYLATRELFESRLKEMSGLEFIVAQEPAETGPGMGTGVWVINKQTRRKRPPTNPARPEDGPPDEIIVHSVYFVVGENIYMAPTLADVLSSRIGAIATAITKTIPLVDEVSDWAPAVGRRYITPAQPSAGAGAASGTTNYTASRTATPLPDGLPSTATTNKPGAKAGGGTTTNDPLLDSLLMEEALLTHERYGTEYMDENPITGKPGDFHLTSTGRKTQTKSALTLKEAAAALPALNTKGLGAAGSNPLAKGAAAAAAANANAVTGKETKSPKTPGGGGPPKPKRRKSKNVITTPGAA.

2 disordered regions span residues 186 to 238 (PAQP…NDPL) and 316 to 360 (AAAA…PGAA). Low complexity-rich tracts occupy residues 190 to 205 (SAGA…YTAS) and 316 to 325 (AAAAAANANA).

The protein belongs to the Mediator complex subunit 6 family. Component of the Mediator complex.

The protein resides in the nucleus. Component of the Mediator complex, a coactivator involved in the regulated transcription of nearly all RNA polymerase II-dependent genes. Mediator functions as a bridge to convey information from gene-specific regulatory proteins to the basal RNA polymerase II transcription machinery. Mediator is recruited to promoters by direct interactions with regulatory proteins and serves as a scaffold for the assembly of a functional preinitiation complex with RNA polymerase II and the general transcription factors. This is Mediator of RNA polymerase II transcription subunit 6 (med-6) from Neurospora crassa (strain ATCC 24698 / 74-OR23-1A / CBS 708.71 / DSM 1257 / FGSC 987).